A 670-amino-acid polypeptide reads, in one-letter code: MSKVFKLHSEFKPAGDQPQAISKLEEGLEDGLAHQTLLGVTGSGKTFTVANVIADLNRPTMVLAPNKTLAAQLYGEMKEFFPENAVEYFVSYYDYYQPEAYVPSSDTFIEKDAAVNEHIEQMRLSATKALLERRDVIVVASVSAIYGLGDPDLYLKMMLHLTKGMIIDQRSILRRLAELQYARNDQAFQRATFRVRGEVIDVFPAESDELALRIELFDEEVERLSLFDPLTGQIEQVVQRFTIYPKSHYVTPRERILQAMEEIKVDLAERRKVLLANNKLLEEQRLTQRTQFDLEMMKELGYCSGIENYSRYLSGRKEGEPPPTLFDYLPADGLLVVDESHVTIPQIGAMYKGDRSRKETLVEYGFRLPSALDNRPMRFEEFEALAPQTIYVSATPGKYELEKSGDDIIDQVVRPTGLLDPLIEVRPVTTQVDDLLSEIRKRVAINERVLVTTLTKRMAEDLTEYLEEHGERVRYLHSDIDTVERVEIIRDLRLGEFDVLVGINLLREGLDMPEVSLVAILDADKEGFLRSERSLIQTIGRAARNLNGKAILYGDRITDSMARAISETERRRAKQQAFNEENGIVPQGLNKKVSDVLQLGKPGNRGKGRGKGKAAENVGQYKNLTPKALDQKIRELEAQMYTHAQNLEFELAAGLRDEIHQLREQFIAIS.

The region spanning 26-183 (EGLEDGLAHQ…RRLAELQYAR (158 aa)) is the Helicase ATP-binding domain. 39–46 (GVTGSGKT) provides a ligand contact to ATP. Positions 92–115 (YYDYYQPEAYVPSSDTFIEKDAAV) match the Beta-hairpin motif. One can recognise a Helicase C-terminal domain in the interval 431–597 (QVDDLLSEIR…GLNKKVSDVL (167 aa)). Residues 630 to 665 (DQKIRELEAQMYTHAQNLEFELAAGLRDEIHQLREQ) enclose the UVR domain.

The protein belongs to the UvrB family. In terms of assembly, forms a heterotetramer with UvrA during the search for lesions. Interacts with UvrC in an incision complex.

It is found in the cytoplasm. The UvrABC repair system catalyzes the recognition and processing of DNA lesions. A damage recognition complex composed of 2 UvrA and 2 UvrB subunits scans DNA for abnormalities. Upon binding of the UvrA(2)B(2) complex to a putative damaged site, the DNA wraps around one UvrB monomer. DNA wrap is dependent on ATP binding by UvrB and probably causes local melting of the DNA helix, facilitating insertion of UvrB beta-hairpin between the DNA strands. Then UvrB probes one DNA strand for the presence of a lesion. If a lesion is found the UvrA subunits dissociate and the UvrB-DNA preincision complex is formed. This complex is subsequently bound by UvrC and the second UvrB is released. If no lesion is found, the DNA wraps around the other UvrB subunit that will check the other stand for damage. The protein is UvrABC system protein B of Serratia proteamaculans (strain 568).